Consider the following 568-residue polypeptide: Natural resistance-associated macrophage protein 2 (568 aa).

The segment covering 1–20 (MVLDPKEKMPDDGASGDHGD) has biased composition (basic and acidic residues). A disordered region spans residues 1–45 (MVLDPKEKMPDDGASGDHGDSASLGAINPAYSNSSLPHSTGDSEE). Residues 1 to 69 (MVLDPKEKMP…EEYSCFSFRK (69 aa)) are Cytoplasmic-facing. Polar residues predominate over residues 30 to 40 (AYSNSSLPHST). A helical transmembrane segment spans residues 70–90 (LWAFTGPGFLMSIAYLDPGNI). The Extracellular segment spans residues 91-95 (ESDLQ). The helical transmembrane segment at 96 to 117 (SGAVAGFKLLWVLLLATIVGLL) threads the bilayer. Residues 118-154 (LQRLAARLGVVTGLHLAEVCHRQYPKVPRIILWLMVE) are Cytoplasmic-facing. The chain crosses the membrane as a helical span at residues 155-175 (LAIIGSDMQEVIGSAIAINLL). Residues 176–179 (SAGR) are Extracellular-facing. The helical transmembrane segment at 180–194 (VPLWGGVLITIADTF) threads the bilayer. At 195–208 (VFLFLDKYGLRKLE) the chain is on the cytoplasmic side. Residues 209–229 (AFFGFLITIMALTFGYEYITV) form a helical membrane-spanning segment. The Extracellular portion of the chain corresponds to 230–255 (KPSQSQVLRGMFVPSCPGCRTPQVEQ). The chain crosses the membrane as a helical span at residues 256-276 (AVGIVGAVIMPHNMYLHSALV). Over 277-301 (KSRQVNRANKQEVREANKYFFIESC) the chain is Cytoplasmic. Residues 302–322 (IALFVSFIINVFVVSVFAEAF) form a helical membrane-spanning segment. Residues 323–360 (FEKTNKQVVEVCKNNSSPHADLFPSDNSTLAVDIYKGG) are Extracellular-facing. N336 and N349 each carry an N-linked (GlcNAc...) asparagine glycan. The helical transmembrane segment at 361 to 381 (VVLGCYFGPAALYIWAVGILA) threads the bilayer. Residues 382–408 (AGQSSTMTGTYSGQFVMEGFLNLKWSR) lie on the Cytoplasmic side of the membrane. Residues 409 to 429 (FARVILTRSIAIIPTLLVAVF) traverse the membrane as a helical segment. Over 430–440 (QDVEHLTGMND) the chain is Extracellular. The helical transmembrane segment at 441–461 (FLNVLQSLQLPFALIPILTFT) threads the bilayer. The Cytoplasmic segment spans residues 462–482 (SLRPVMSEFSNGIGWRIAGGI). Residues 483–503 (LVLIVCSINMYFVVVYVQELG) traverse the membrane as a helical segment. Over 504-506 (HVA) the chain is Extracellular. Residues 507–527 (LYVVAAVVSVAYLTFVFYLGW) form a helical membrane-spanning segment. Over 528-568 (QCLIALGLSFLDCGRSYRLGLTAQPELYLLNTVDADSVVSR) the chain is Cytoplasmic. The required for early endosome targeting stretch occupies residues 555–559 (YLLNT). L556, S564, and S567 each carry phosphoserine.

Belongs to the NRAMP family. In terms of assembly, forms a complex with NDFIP1 and NEDD4L, in cortical neurons, in response to iron and cobalt exposure; this interaction leads to SLC11A2 ubiquitination by NEDD4L and proteasome-dependent degradation. Interacts with NDFIP1, NDFIP2 and WWP2; this interaction leads to SLC11A2 ubiquitination by WWP2 and subsequent proteasome-dependent degradation. Interacts with COX2 and TOM6 at the outer mitochondrion membrane. Interacts with ARRDC1; this interaction regulates the incorporation of SLC11A2 into extracellular vesicles through an ubiquitination-dependent mechanism. Interacts with ARRDC4; controls the incorporation of SLC11A2 into extracellular vesicles through an ubiquitination-dependent mechanism. Post-translationally, ubiquitinated by WWP2. N-glycosylated. As to expression, abundantly expressed in erythroid precursor cells (at protein level). Expressed in duodenum (at protein level).

Its subcellular location is the golgi apparatus. It localises to the trans-Golgi network membrane. The protein localises to the early endosome membrane. The protein resides in the recycling endosome membrane. It is found in the cell membrane. Its subcellular location is the late endosome membrane. It localises to the lysosome membrane. The protein localises to the apical cell membrane. The protein resides in the mitochondrion outer membrane. It is found in the extracellular vesicle membrane. It carries out the reaction Fe(2+)(in) + H(+)(in) = Fe(2+)(out) + H(+)(out). The enzyme catalyses Co(2+)(out) + H(+)(out) = Co(2+)(in) + H(+)(in). It catalyses the reaction Cd(2+)(out) + H(+)(out) = Cd(2+)(in) + H(+)(in). The catalysed reaction is Mn(2+)(in) + H(+)(in) = Mn(2+)(out) + H(+)(out). It carries out the reaction Zn(2+)(out) + H(+)(out) = Zn(2+)(in) + H(+)(in). The enzyme catalyses Ni(2+)(out) + H(+)(out) = Ni(2+)(in) + H(+)(in). It catalyses the reaction H(+)(in) = H(+)(out). The catalysed reaction is Fe(2+)(in) = Fe(2+)(out). Its function is as follows. Proton-coupled metal ion symporter operating with a proton to metal ion stoichiometry of 1:1. Selectively transports various divalent metal cations, in decreasing affinity: Cd(2+) &gt; Fe(2+) &gt; Co(2+), Mn(2+) &gt;&gt; Zn(2+), Ni(2+), VO(2+). Essential for maintenance of iron homeostasis by modulating intestinal absorption of dietary Fe(2+) and TF-associated endosomal Fe(2+) transport in erythroid precursors and other cells. Enables Fe(2+) and Mn(2+) ion entry into mitochondria, and is thus expected to promote mitochondrial heme synthesis, iron-sulfur cluster biogenesis and antioxidant defense. Can mediate uncoupled fluxes of either protons or metal ions. The chain is Natural resistance-associated macrophage protein 2 (Slc11a2) from Mus musculus (Mouse).